Consider the following 306-residue polypeptide: Triplex capsid protein 2 (306 aa).

The protein belongs to the herpesviridae TRX2 protein family. Interacts with TRX1 and major capisd protein/MCP.

It is found in the virion. Its subcellular location is the host nucleus. Its function is as follows. Structural component of the T=16 icosahedral capsid. The capsid is composed of pentamers and hexamers of major capsid protein/MCP, which are linked together by heterotrimers called triplexes. These triplexes are formed by a single molecule of triplex protein 1/TRX1 and two copies of triplex protein 2/TRX2. Additionally, TRX1 is required for efficient transport of TRX2 to the nucleus, which is the site of capsid assembly. This chain is Triplex capsid protein 2, found in Alcelaphine herpesvirus 1 (strain C500) (AlHV-1).